Consider the following 570-residue polypeptide: Nucleoprotein (570 aa).

A binding site for the cap structure m7GTP region spans residues 54–236; the sequence is LRKTKRTDDD…ITKEESSINI (183 aa). Residues 332–356 form a disordered region; it reads DLTKKPDAVPEPGAAPRPAERKGQN. Mg(2+) is bound by residues Asp-386 and Glu-388. Mn(2+) contacts are provided by Asp-386 and Glu-388. Zn(2+)-binding residues include Glu-396, Cys-503, His-506, and Cys-531. Asp-535 contacts Mg(2+). Asp-535 lines the Mn(2+) pocket.

The protein belongs to the arenaviridae nucleocapsid protein family. In terms of assembly, homomultimerizes to form the nucleocapsid. Binds to viral genomic RNA. Interacts with glycoprotein G2. Interacts with protein Z; this interaction probably directs the encapsidated genome to budding sites. Interacts with protein L; this interaction does not interfere with Z-L interaction. Interacts with host IKBKE (via Protein kinase domain); the interaction inhibits IKBKE kinase activity.

Its subcellular location is the virion. The protein localises to the host cytoplasm. Functionally, encapsidates the genome, protecting it from nucleases. The encapsidated genomic RNA is termed the nucleocapsid (NC). Serves as template for viral transcription and replication. The increased presence of protein N in host cell does not seem to trigger the switch from transcription to replication as observed in other negative strain RNA viruses. Through the interaction with host IKBKE, strongly inhibits the phosphorylation and nuclear translocation of host IRF3, a protein involved in interferon activation pathway, leading to the inhibition of interferon-beta and IRF3-dependent promoters activation. Also encodes a functional 3'-5' exoribonuclease that degrades preferentially dsRNA substrates and thereby participates in the suppression of interferon induction. This Artibeus (neotropical fruit bats) protein is Nucleoprotein.